Here is a 323-residue protein sequence, read N- to C-terminus: HPr kinase/phosphorylase (323 aa).

Active-site residues include His-146 and Lys-167. An ATP-binding site is contributed by 161–168 (GESGLGKS). Ser-168 contributes to the Mg(2+) binding site. The active-site Proton acceptor; for phosphorylation activity. Proton donor; for dephosphorylation activity is Asp-185. An important for the catalytic mechanism of both phosphorylation and dephosphorylation region spans residues 209–218 (LEVRGLGLLD). Glu-210 contributes to the Mg(2+) binding site. The active site involves Arg-250. The interval 271–276 (QVAAGR) is important for the catalytic mechanism of dephosphorylation.

The protein belongs to the HPrK/P family. In terms of assembly, homohexamer. It depends on Mg(2+) as a cofactor.

It catalyses the reaction [HPr protein]-L-serine + ATP = [HPr protein]-O-phospho-L-serine + ADP + H(+). The catalysed reaction is [HPr protein]-O-phospho-L-serine + phosphate + H(+) = [HPr protein]-L-serine + diphosphate. Functionally, catalyzes the ATP- as well as the pyrophosphate-dependent phosphorylation of a specific serine residue in HPr, a phosphocarrier protein of the phosphoenolpyruvate-dependent sugar phosphotransferase system (PTS). HprK/P also catalyzes the pyrophosphate-producing, inorganic phosphate-dependent dephosphorylation (phosphorolysis) of seryl-phosphorylated HPr (P-Ser-HPr). This is HPr kinase/phosphorylase from Cupriavidus pinatubonensis (strain JMP 134 / LMG 1197) (Cupriavidus necator (strain JMP 134)).